A 318-amino-acid polypeptide reads, in one-letter code: L-lactate dehydrogenase (318 aa).

NAD(+) is bound by residues V18, D39, K44, Y69, and 83–84 (GA). Substrate is bound by residues Q86 and R92. NAD(+)-binding positions include S105, 122–124 (VSN), and S147. 124 to 127 (NPVD) contacts substrate. Residue 152-155 (DTSR) coordinates substrate. The active-site Proton acceptor is the H179. Phosphotyrosine is present on Y225. Substrate is bound at residue T234.

Belongs to the LDH/MDH superfamily. LDH family. Homotetramer.

The protein resides in the cytoplasm. It catalyses the reaction (S)-lactate + NAD(+) = pyruvate + NADH + H(+). The protein operates within fermentation; pyruvate fermentation to lactate; (S)-lactate from pyruvate: step 1/1. Functionally, catalyzes the conversion of lactate to pyruvate. This is L-lactate dehydrogenase from Clostridium botulinum (strain Loch Maree / Type A3).